Consider the following 92-residue polypeptide: Acylphosphatase (92 aa).

The cysteines at positions 5 and 49 are disulfide-linked. An Acylphosphatase-like domain is found at 5–92 (CIIAWVYGRV…SGELTDFRIR (88 aa)). Catalysis depends on residues arginine 20 and asparagine 38.

Belongs to the acylphosphatase family.

The catalysed reaction is an acyl phosphate + H2O = a carboxylate + phosphate + H(+). This is Acylphosphatase from Escherichia coli O157:H7.